Here is a 1520-residue protein sequence, read N- to C-terminus: Protein TALPID3 (1520 aa).

The interval 322–370 (LSEDTDFDGQKSPLETPAPRRFAPVPVSRDGKITKRESPTEEKENMEMN) is disordered. A compositionally biased stretch (basic and acidic residues) spans 350–367 (RDGKITKRESPTEEKENM). A Phosphoserine modification is found at serine 426. The required for centrosomal localization stretch occupies residues 485 to 572 (SVLKDAAKIL…YEQKRFDPKN (88 aa)). A coiled-coil region spans residues 487-519 (LKDAAKILRGVQNNKKVLEENLEAIVRAKDGAA). Disordered stretches follow at residues 568-632 (FDPK…RSGL), 759-793 (NSDS…NAGV), 826-848 (VSYS…LPPL), 1060-1093 (TPQP…PDAA), 1145-1170 (SSPE…SLQE), 1184-1230 (EEPE…ENTL), and 1500-1520 (SQSL…TDTF). Polar residues-rich tracts occupy residues 587-596 (ANNQEKTVNR) and 605-616 (QKQTQEQFTSPP). Residues 826-836 (VSYSSTDGASS) show a composition bias toward polar residues. A phosphothreonine mark is found at threonine 1060 and threonine 1064. Pro residues predominate over residues 1060–1069 (TPQPTPPCSP). Serine 1068 carries the post-translational modification Phosphoserine. Position 1080 is a phosphothreonine (threonine 1080). Serine 1083 carries the post-translational modification Phosphoserine. Positions 1195 to 1205 (PAPPEPAPSAP) are enriched in pro residues. The segment covering 1217–1230 (RVPSSGSSTLENTL) has biased composition (polar residues).

Belongs to the TALPID3 family. Interacts with CEP120. Interacts with CCP110, CEP290, CEP97, KIF24. In terms of tissue distribution, expressed in photoreceptor cells (at protein level).

Its subcellular location is the cytoplasm. It localises to the cytoskeleton. It is found in the microtubule organizing center. The protein resides in the centrosome. The protein localises to the photoreceptor inner segment. Its subcellular location is the centriole. It localises to the cilium basal body. In terms of biological role, required for ciliogenesis and sonic hedgehog/SHH signaling. Required for the centrosomal recruitment of RAB8A and for the targeting of centriole satellite proteins to centrosomes such as of PCM1. May play a role in early ciliogenesis in the disappearance of centriolar satellites that preceeds ciliary vesicle formation. Involved in regulation of cell intracellular organization. Involved in regulation of cell polarity. Required for asymmetrical localization of CEP120 to daughter centrioles. The protein is Protein TALPID3 (Talpid3) of Mus musculus (Mouse).